The sequence spans 441 residues: GTPase Der (441 aa).

EngA-type G domains are found at residues 3–167 (PLIA…PNKT) and 176–351 (TRIA…EQFA). Residues 9–16 (GRPNVGKS), 56–60 (DTGGF), 119–122 (NKID), 182–189 (GRPNVGKS), 229–233 (DTAGI), and 294–297 (NKWD) contribute to the GTP site. The region spanning 352-436 (KRISTSDLNR…PMRLLFKGRE (85 aa)) is the KH-like domain.

This sequence belongs to the TRAFAC class TrmE-Era-EngA-EngB-Septin-like GTPase superfamily. EngA (Der) GTPase family. Associates with the 50S ribosomal subunit.

Its function is as follows. GTPase that plays an essential role in the late steps of ribosome biogenesis. The polypeptide is GTPase Der (Geotalea daltonii (strain DSM 22248 / JCM 15807 / FRC-32) (Geobacter daltonii)).